The sequence spans 91 residues: Acylphosphatase (91 aa).

An Acylphosphatase-like domain is found at cysteine 6–leucine 91. Catalysis depends on residues arginine 21 and asparagine 39.

It belongs to the acylphosphatase family.

The enzyme catalyses an acyl phosphate + H2O = a carboxylate + phosphate + H(+). The sequence is that of Acylphosphatase (acyP) from Legionella pneumophila (strain Lens).